A 104-amino-acid chain; its full sequence is uncharacterized protein (104 aa).

Disordered stretches follow at residues methionine 1–lysine 20 and threonine 83–lysine 104. A compositionally biased stretch (low complexity) spans threonine 83–valine 93. The segment covering valine 94–lysine 104 has biased composition (basic residues).

This is an uncharacterized protein from Dictyostelium discoideum (Social amoeba).